The following is a 204-amino-acid chain: Imidazoleglycerol-phosphate dehydratase (204 aa).

This sequence belongs to the imidazoleglycerol-phosphate dehydratase family.

It localises to the cytoplasm. It catalyses the reaction D-erythro-1-(imidazol-4-yl)glycerol 3-phosphate = 3-(imidazol-4-yl)-2-oxopropyl phosphate + H2O. The protein operates within amino-acid biosynthesis; L-histidine biosynthesis; L-histidine from 5-phospho-alpha-D-ribose 1-diphosphate: step 6/9. The sequence is that of Imidazoleglycerol-phosphate dehydratase from Corynebacterium jeikeium (strain K411).